We begin with the raw amino-acid sequence, 337 residues long: Peroxisome biogenesis factor 10 (337 aa).

Residues 1–24 (MKNDNKLQKEALMRLSQLRFPFAD) are Peroxisomal matrix-facing. Residues 25–54 (APSIVQAHQKDEQIQGLLIMKVTELCKLIK) form a helical membrane-spanning segment. Position 55 (Ser-55) is a topological domain, cytoplasmic. Residues 56 to 77 (QLFVNSYPKELSIFAKLLYLLF) form a helical membrane-spanning segment. Residues 78–105 (TTGRRGRTLGEEYVDLTYTNRKGTRLAG) are Peroxisomal matrix-facing. The helical transmembrane segment at 106-138 (RLKMIVFAFAYPLCPYFITKLYKKIMKNNKESK) threads the bilayer. Residues 139-145 (IEDTESV) lie on the Cytoplasmic side of the membrane. A helical transmembrane segment spans residues 146-166 (AAFCKGLLDFILDVHMTLFYF). Topologically, residues 167–202 (KGAFYSISKRIFGMRYVFKHILSKNEANFREEGSQK) are peroxisomal matrix. Residues 203–222 (YKVLGYILLAQNVMKWYPVL) form a helical membrane-spanning segment. Topologically, residues 223–337 (TSTLGSWIYG…QPQEILVLRQ (115 aa)) are cytoplasmic. The Zn(2+) site is built by Cys-286, Cys-289, Cys-301, His-303, Cys-306, Cys-309, Cys-320, and Cys-323. The RING-type zinc finger occupies 286-327 (CILCLMNMSDPSCAPCGHLFCWSCLMSWCKERPECPLCRQHC).

Belongs to the pex2/pex10/pex12 family. Component of the PEX2-PEX10-PEX12 retrotranslocation channel, composed of PEX2, PEX10 and PEX12.

It localises to the peroxisome membrane. It catalyses the reaction S-ubiquitinyl-[E2 ubiquitin-conjugating enzyme]-L-cysteine + [acceptor protein]-L-lysine = [E2 ubiquitin-conjugating enzyme]-L-cysteine + N(6)-ubiquitinyl-[acceptor protein]-L-lysine.. It functions in the pathway protein modification; protein ubiquitination. Its activity is regulated as follows. The E3 ubiquitin-protein ligase activity is stimulated by PEX12. Its function is as follows. E3 ubiquitin-protein ligase component of a retrotranslocation channel required for peroxisome organization by mediating export of the PEX5 receptor from peroxisomes to the cytosol, thereby promoting PEX5 recycling. The retrotranslocation channel is composed of PEX2, PEX10 and PEX12; each subunit contributing transmembrane segments that coassemble into an open channel that specifically allows the passage of PEX5 through the peroxisomal membrane. PEX10 also regulates PEX5 recycling by acting as a E3 ubiquitin-protein ligase. When PEX5 recycling is compromised, PEX10 catalyzes polyubiquitination of PEX5 during its passage through the retrotranslocation channel, leading to its degradation. The sequence is that of Peroxisome biogenesis factor 10 from Saccharomyces cerevisiae (strain ATCC 204508 / S288c) (Baker's yeast).